Consider the following 247-residue polypeptide: Orotidine 5'-phosphate decarboxylase (247 aa).

Residues Asp16, Lys38, 66–75, Thr130, Arg191, Gln200, Gly220, and Arg221 contribute to the substrate site; that span reads DLKFHDIPNT. Lys68 (proton donor) is an active-site residue.

This sequence belongs to the OMP decarboxylase family. Type 1 subfamily. In terms of assembly, homodimer.

The catalysed reaction is orotidine 5'-phosphate + H(+) = UMP + CO2. Its pathway is pyrimidine metabolism; UMP biosynthesis via de novo pathway; UMP from orotate: step 2/2. Functionally, catalyzes the decarboxylation of orotidine 5'-monophosphate (OMP) to uridine 5'-monophosphate (UMP). This is Orotidine 5'-phosphate decarboxylase from Rhodospirillum rubrum (strain ATCC 11170 / ATH 1.1.1 / DSM 467 / LMG 4362 / NCIMB 8255 / S1).